A 356-amino-acid polypeptide reads, in one-letter code: Peptide chain release factor 1 (356 aa).

An N5-methylglutamine modification is found at Gln-233.

Belongs to the prokaryotic/mitochondrial release factor family. In terms of processing, methylated by PrmC. Methylation increases the termination efficiency of RF1.

It is found in the cytoplasm. Its function is as follows. Peptide chain release factor 1 directs the termination of translation in response to the peptide chain termination codons UAG and UAA. The protein is Peptide chain release factor 1 of Symbiobacterium thermophilum (strain DSM 24528 / JCM 14929 / IAM 14863 / T).